The sequence spans 781 residues: Translation initiation factor IF-2 (781 aa).

A disordered region spans residues Arg-44 to Glu-195. Over residues Thr-53 to Thr-65 the composition is skewed to basic and acidic residues. Residues Ser-66–Thr-81 show a composition bias toward polar residues. A compositionally biased stretch (low complexity) spans Asn-82–Pro-93. A compositionally biased stretch (polar residues) spans Lys-115–Ser-126. A compositionally biased stretch (low complexity) spans Gly-127 to Gly-169. The region spanning Glu-282–Lys-451 is the tr-type G domain. The G1 stretch occupies residues Gly-291 to Thr-298. Gly-291–Thr-298 serves as a coordination point for GTP. The segment at Gly-316–His-320 is G2. The interval Asp-337–Gly-340 is G3. GTP contacts are provided by residues Asp-337 to His-341 and Asn-391 to Asp-394. The segment at Asn-391 to Asp-394 is G4. Residues Ser-427–Lys-429 form a G5 region.

It belongs to the TRAFAC class translation factor GTPase superfamily. Classic translation factor GTPase family. IF-2 subfamily.

The protein resides in the cytoplasm. In terms of biological role, one of the essential components for the initiation of protein synthesis. Protects formylmethionyl-tRNA from spontaneous hydrolysis and promotes its binding to the 30S ribosomal subunits. Also involved in the hydrolysis of GTP during the formation of the 70S ribosomal complex. This Listeria monocytogenes serotype 4a (strain HCC23) protein is Translation initiation factor IF-2.